The sequence spans 158 residues: Endoribonuclease YbeY (158 aa).

Zn(2+) is bound by residues histidine 117, histidine 121, and histidine 127.

It belongs to the endoribonuclease YbeY family. Zn(2+) is required as a cofactor.

The protein resides in the cytoplasm. Single strand-specific metallo-endoribonuclease involved in late-stage 70S ribosome quality control and in maturation of the 3' terminus of the 16S rRNA. The sequence is that of Endoribonuclease YbeY from Psychromonas ingrahamii (strain DSM 17664 / CCUG 51855 / 37).